Reading from the N-terminus, the 1106-residue chain is Exportin-T (1106 aa).

The interval 336 to 357 is disordered; sequence TPLESRTRTGPSAQNGQSDTSD. The span at 343–357 shows a compositional bias: polar residues; it reads RTGPSAQNGQSDTSD.

Belongs to the exportin family.

The protein resides in the nucleus. It localises to the cytoplasm. TRNA nucleus export receptor which facilitates tRNA translocation across the nuclear pore complex. Involved in pre-tRNA splicing, probably by affecting the interaction of pre-tRNA with splicing endonuclease. In Mycosarcoma maydis (Corn smut fungus), this protein is Exportin-T (LOS1).